A 693-amino-acid polypeptide reads, in one-letter code: Elongation factor G (693 aa).

The region spanning 8–282 (EKTRNIGIMA…AVIDYLPSPL (275 aa)) is the tr-type G domain. GTP contacts are provided by residues 17–24 (AHVDAGKT), 81–85 (DTPGH), and 135–138 (NKMD).

It belongs to the TRAFAC class translation factor GTPase superfamily. Classic translation factor GTPase family. EF-G/EF-2 subfamily.

It is found in the cytoplasm. Its function is as follows. Catalyzes the GTP-dependent ribosomal translocation step during translation elongation. During this step, the ribosome changes from the pre-translocational (PRE) to the post-translocational (POST) state as the newly formed A-site-bound peptidyl-tRNA and P-site-bound deacylated tRNA move to the P and E sites, respectively. Catalyzes the coordinated movement of the two tRNA molecules, the mRNA and conformational changes in the ribosome. This chain is Elongation factor G, found in Streptococcus pneumoniae serotype 2 (strain D39 / NCTC 7466).